A 144-amino-acid chain; its full sequence is Deoxyuridine 5'-triphosphate nucleotidohydrolase (144 aa).

Residues 63 to 65 (RSG), N76, and 80 to 82 (TVD) contribute to the substrate site.

It belongs to the dUTPase family. Requires Mg(2+) as cofactor.

The catalysed reaction is dUTP + H2O = dUMP + diphosphate + H(+). It functions in the pathway pyrimidine metabolism; dUMP biosynthesis; dUMP from dCTP (dUTP route): step 2/2. In terms of biological role, this enzyme is involved in nucleotide metabolism: it produces dUMP, the immediate precursor of thymidine nucleotides and it decreases the intracellular concentration of dUTP so that uracil cannot be incorporated into DNA. This is Deoxyuridine 5'-triphosphate nucleotidohydrolase from Treponema denticola (strain ATCC 35405 / DSM 14222 / CIP 103919 / JCM 8153 / KCTC 15104).